Reading from the N-terminus, the 100-residue chain is Urease subunit gamma (100 aa).

Belongs to the urease gamma subunit family. In terms of assembly, heterotrimer of UreA (gamma), UreB (beta) and UreC (alpha) subunits. Three heterotrimers associate to form the active enzyme.

It is found in the cytoplasm. It catalyses the reaction urea + 2 H2O + H(+) = hydrogencarbonate + 2 NH4(+). It participates in nitrogen metabolism; urea degradation; CO(2) and NH(3) from urea (urease route): step 1/1. The chain is Urease subunit gamma from Rhizobium rhizogenes (strain K84 / ATCC BAA-868) (Agrobacterium radiobacter).